The following is a 377-amino-acid chain: uncharacterized protein (377 aa).

Transmembrane regions (helical) follow at residues 71 to 91 and 140 to 160; these read IIAT…LVGS and AEAA…PTLF.

It is found in the membrane. This is an uncharacterized protein from Coxiella burnetii (strain RSA 493 / Nine Mile phase I).